We begin with the raw amino-acid sequence, 316 residues long: Apolipoprotein E (316 aa).

The N-terminal stretch at methionine 1–alanine 18 is a signal peptide. 8 repeat units span residues valine 79–alanine 100, proline 101–glycine 122, serine 123–glycine 144, glutamine 145–leucine 166, arginine 167–glutamate 188, arginine 189–alanine 210, threonine 211–histidine 232, and glycine 233–glutamate 254. Residues valine 79–glutamate 254 form an 8 X 22 AA approximate tandem repeats region. At methionine 142 the chain carries Methionine sulfoxide. Position 146 is a phosphoserine (serine 146). An LDL and other lipoprotein receptors binding region spans residues histidine 157–arginine 167. Leucine 161–arginine 164 provides a ligand contact to heparin. Residues alanine 209–methionine 289 are lipid-binding and lipoprotein association. An O-linked (GalNAc...) threonine glycan is attached at threonine 211. Arginine 228 to leucine 235 contacts heparin. Residues serine 265–histidine 316 are homooligomerization. Residues arginine 277–methionine 289 form a specificity for association with VLDL region.

It belongs to the apolipoprotein A1/A4/E family. Homotetramer. May interact with ABCA1; functionally associated with ABCA1 in the biogenesis of HDLs. May interact with APP/A4 amyloid-beta peptide; the interaction is extremely stable in vitro but its physiological significance is unclear. May interact with MAPT. May interact with MAP2. In the cerebrospinal fluid, interacts with secreted SORL1. Interacts with PMEL; this allows the loading of PMEL luminal fragment on ILVs to induce fibril nucleation. Post-translationally, APOE exists as multiple glycosylated and sialylated glycoforms within cells and in plasma. The extent of glycosylation and sialylation are tissue and context specific. In terms of processing, glycated in plasma VLDL. Phosphorylated by FAM20C in the extracellular medium.

The protein resides in the secreted. It is found in the extracellular space. It localises to the extracellular matrix. Its subcellular location is the extracellular vesicle. The protein localises to the endosome. The protein resides in the multivesicular body. In terms of biological role, APOE is an apolipoprotein, a protein associating with lipid particles, that mainly functions in lipoprotein-mediated lipid transport between organs via the plasma and interstitial fluids. APOE is a core component of plasma lipoproteins and is involved in their production, conversion and clearance. Apolipoproteins are amphipathic molecules that interact both with lipids of the lipoprotein particle core and the aqueous environment of the plasma. As such, APOE associates with chylomicrons, chylomicron remnants, very low density lipoproteins (VLDL) and intermediate density lipoproteins (IDL) but shows a preferential binding to high-density lipoproteins (HDL). It also binds a wide range of cellular receptors including the LDL receptor/LDLR and the very low-density lipoprotein receptor/VLDLR that mediate the cellular uptake of the APOE-containing lipoprotein particles. Finally, APOE also has a heparin-binding activity and binds heparan-sulfate proteoglycans on the surface of cells, a property that supports the capture and the receptor-mediated uptake of APOE-containing lipoproteins by cells. In Capra hircus aegagrus (Wild goat), this protein is Apolipoprotein E (APOE).